The following is a 499-amino-acid chain: Patatin-like protein 6 (499 aa).

Residues 111 to 314 form the PNPLA domain; the sequence is LSIDSGGMRG…AMSNPTAAAI (204 aa). The GGXR signature appears at 116-119; the sequence is GGMR. S155 (nucleophile) is an active-site residue. D301 (proton acceptor) is an active-site residue. The DGA/G signature appears at 301–303; that stretch reads DGG.

It belongs to the patatin family. Highly expressed in siliques and at lower levels in roots and flowers.

Functionally, possesses non-specific lipolytic acyl hydrolase (LAH) activity. Hydrolyzes phospholipids as well as galactolipids. May play a role in disease resistance. The protein is Patatin-like protein 6 (PLP6) of Arabidopsis thaliana (Mouse-ear cress).